Here is a 310-residue protein sequence, read N- to C-terminus: GTPase Era (310 aa).

Residues 17-184 enclose the Era-type G domain; sequence RSGFVALIGA…MDYLAERLPE (168 aa). Residues 25–32 form a G1 region; sequence GATNAGKS. 25 to 32 contributes to the GTP binding site; sequence GATNAGKS. Positions 51–55 are G2; sequence QTTRA. Residues 72 to 75 form a G3 region; sequence DTPG. GTP is bound by residues 72–76 and 134–137; these read DTPGI and NKVD. The segment at 134-137 is G4; the sequence is NKVD. Residues 163-165 form a G5 region; the sequence is ISA. In terms of domain architecture, KH type-2 spans 215–292; that stretch reads LHQELPYASH…HLFLFVKVRE (78 aa).

This sequence belongs to the TRAFAC class TrmE-Era-EngA-EngB-Septin-like GTPase superfamily. Era GTPase family. In terms of assembly, monomer.

The protein localises to the cytoplasm. The protein resides in the cell inner membrane. Functionally, an essential GTPase that binds both GDP and GTP, with rapid nucleotide exchange. Plays a role in 16S rRNA processing and 30S ribosomal subunit biogenesis and possibly also in cell cycle regulation and energy metabolism. The protein is GTPase Era of Sinorhizobium medicae (strain WSM419) (Ensifer medicae).